The sequence spans 375 residues: GRTSIDNLCRIVESAIKAGATTINIPDTVGYTIPSQFKTIIKNLFNKVPNINNAIISAHCHDDLGLAVGNAIASIEAGVRQIEGTISGIGERAGNTALEEVILTIKLKEELLNVFTNIKHNELYRTSQLISQLCNTPIPANKSIIGSNAFAHSSGIHQDGILKNRANYEIIDPKTIGVKAVQLNLTSRSGRAAVKHHMHEMGYQDDDYDLNQLYVNFLKLADKKGQVFDYDLEALAFISNQEDKDQEHFQLKYFSIHSGSTGVSTASVKLLCGNKILNEIITTRNGPINSIYQALNNIAGLPIVLEKFHLVGKGEGRDALGQVDIVVKYNNRKFHGIGLATDIIESSIKAMLNVLNNIWLSNKIKSKIKNIKNKK.

Positions 1–124 (GRTSIDNLCR…FTNIKHNELY (124 aa)) constitute a Pyruvate carboxyltransferase domain. Positions 59, 61, and 95 each coordinate Mn(2+). Positions 250 to 375 (QLKYFSIHSG…SKIKNIKNKK (126 aa)) are regulatory domain.

Belongs to the alpha-IPM synthase/homocitrate synthase family. LeuA type 1 subfamily. As to quaternary structure, homodimer.

It is found in the cytoplasm. It carries out the reaction 3-methyl-2-oxobutanoate + acetyl-CoA + H2O = (2S)-2-isopropylmalate + CoA + H(+). It functions in the pathway amino-acid biosynthesis; L-leucine biosynthesis; L-leucine from 3-methyl-2-oxobutanoate: step 1/4. Its function is as follows. Catalyzes the condensation of the acetyl group of acetyl-CoA with 3-methyl-2-oxobutanoate (2-ketoisovalerate) to form 3-carboxy-3-hydroxy-4-methylpentanoate (2-isopropylmalate). The sequence is that of 2-isopropylmalate synthase from Buchnera aphidicola subsp. Thelaxes suberi.